An 833-amino-acid chain; its full sequence is Urease (833 aa).

The Urease domain occupies 395 to 833; the sequence is GALDVHVHYI…LPLTRRYFVY (439 aa). Ni(2+)-binding residues include His-400 and His-402. Residues His-402 and Ala-433 each coordinate urea. Lys-483 provides a ligand contact to Ni(2+). The residue at position 483 (Lys-483) is an N6-carboxylysine. Positions 485 and 512 each coordinate urea. Ni(2+) is bound by residues His-512 and His-538. Residue His-586 is the Proton donor of the active site. Asp-626 is a Ni(2+) binding site. Ala-629 serves as a coordination point for urea.

The protein in the C-terminal section; belongs to the metallo-dependent hydrolases superfamily. Urease alpha subunit family. Homohexamer. Ni(2+) serves as cofactor. In terms of processing, carboxylation allows a single lysine to coordinate two nickel ions.

The catalysed reaction is urea + 2 H2O + H(+) = hydrogencarbonate + 2 NH4(+). The protein operates within nitrogen metabolism; urea degradation; CO(2) and NH(3) from urea (urease route): step 1/1. Its activity is regulated as follows. The urease accessory proteins URE4, URE6 and URE7 are required for urease activity, URE7 supplying nickel for the functional urease. In terms of biological role, plays a nutritional role via nitrogen acquisition in the environment. Contributes to the central nervous system invasion by enhancing yeast sequestration within microcapillary beds (such as within the brain) during hematogenous spread, thereby facilitating blood-to-brain invasion by C.neoformans. Affects fitness within the mammalian phagosome, promoting non-lytic exocytosis while delaying intracellular replication and thus reducing phagolysosomal membrane damage, events that could facilitate cryptococcal dissemination when transported inside macrophages. Urease activity is also associated with the regulation of key intracellular metabolic pathways, including melanin biosynthesis, polyamine biosynthesis, as well as intracellular levels of proline and reactive oxygen species. This is Urease from Cryptococcus neoformans var. grubii serotype A (strain H99 / ATCC 208821 / CBS 10515 / FGSC 9487) (Filobasidiella neoformans var. grubii).